Reading from the N-terminus, the 88-residue chain is Small cysteine-rich outer membrane protein OmcA (88 aa).

The signal sequence occupies residues 1–18 (MKKTALLAALCSVVSLSS). A lipid anchor (N-palmitoyl cysteine) is attached at C19. C19 is lipidated: S-diacylglycerol cysteine. Positions 67–88 (THQDAEHGPQAREIPVDGKCRQ) are disordered.

As to quaternary structure, part of a disulfide cross-linked outer membrane complex (COMC) composed of the major outer membrane porin (MOMP), the small cysteine-rich protein (OmcA) and the large cysteine-rich periplasmic protein (OmcB).

The protein resides in the cell outer membrane. In elementary bodies (EBs, the infectious stage, which is able to survive outside the host cell) provides the structural integrity of the outer envelope through disulfide cross-links with the large cysteine-rich periplasmic protein and the major outer membrane porin. It has been described in publications as the Sarkosyl-insoluble COMC (Chlamydia outer membrane complex), and serves as the functional equivalent of peptidoglycan. This chain is Small cysteine-rich outer membrane protein OmcA (omcA), found in Chlamydia trachomatis serovar L2 (strain ATCC VR-902B / DSM 19102 / 434/Bu).